The following is a 200-amino-acid chain: MPIGVPKVAYRLPGESTPQWVDLYNRLYRERVLFLGSGLDDELANQLNGIMLYLSAEDASRSLFLYINSPGGSVTAGLSVFDIMNYVQASVTTIGIGFAASMASFILAGGERGSRIALPHCRVMIHQPQGGMEGQASEVVLEKEEIVRLRRLIGRLYVDLTGQPLSTIANDLDRDKYLSAREAREYGLVDLVATTETATV.

Serine 101 acts as the Nucleophile in catalysis. Histidine 126 is a catalytic residue.

The protein belongs to the peptidase S14 family. Component of the chloroplastic Clp protease core complex.

The protein localises to the plastid. It is found in the chloroplast stroma. It catalyses the reaction Hydrolysis of proteins to small peptides in the presence of ATP and magnesium. alpha-casein is the usual test substrate. In the absence of ATP, only oligopeptides shorter than five residues are hydrolyzed (such as succinyl-Leu-Tyr-|-NHMec, and Leu-Tyr-Leu-|-Tyr-Trp, in which cleavage of the -Tyr-|-Leu- and -Tyr-|-Trp bonds also occurs).. Its function is as follows. Cleaves peptides in various proteins in a process that requires ATP hydrolysis. Has a chymotrypsin-like activity. Plays a major role in the degradation of misfolded proteins. The polypeptide is ATP-dependent Clp protease proteolytic subunit (Ostreococcus tauri).